A 102-amino-acid polypeptide reads, in one-letter code: Thioredoxin (102 aa).

One can recognise a Thioredoxin domain in the interval Met-1 to Gln-102. The cysteines at positions 28 and 31 are disulfide-linked.

Belongs to the thioredoxin family.

Functionally, participates in various redox reactions through the reversible oxidation of its active center dithiol to a disulfide and catalyzes dithiol-disulfide exchange reactions. The polypeptide is Thioredoxin (trxA) (Chlamydia trachomatis serovar D (strain ATCC VR-885 / DSM 19411 / UW-3/Cx)).